The chain runs to 151 residues: Large ribosomal subunit protein eL8 (151 aa).

This sequence belongs to the eukaryotic ribosomal protein eL8 family. Part of the 50S ribosomal subunit. Probably part of the RNase P complex.

The protein resides in the cytoplasm. Functionally, multifunctional RNA-binding protein that recognizes the K-turn motif in ribosomal RNA, the RNA component of RNase P, box H/ACA, box C/D and box C'/D' sRNAs. The polypeptide is Large ribosomal subunit protein eL8 (Pyrobaculum neutrophilum (strain DSM 2338 / JCM 9278 / NBRC 100436 / V24Sta) (Thermoproteus neutrophilus)).